The primary structure comprises 541 residues: 3-oxoacyl-[acyl-carrier-protein] synthase II, chloroplastic (541 aa).

The transit peptide at 1–103 (MVGASSSYAS…NRNQRRLNRA (103 aa)) directs the protein to the chloroplast. One can recognise a Ketosynthase family 3 (KS3) domain in the interval 129–539 (QRRVVVTGMG…GHNSSIIFAP (411 aa)). Catalysis depends on for beta-ketoacyl synthase activity residues Cys292, His432, and His468.

This sequence belongs to the thiolase-like superfamily. Beta-ketoacyl-ACP synthases family. Homodimer. In terms of tissue distribution, mostly expressed in siliques, and, to a lower extent, in leaves, stems, flower buds, and flowers.

It localises to the plastid. It is found in the chloroplast stroma. It carries out the reaction a fatty acyl-[ACP] + malonyl-[ACP] + H(+) = a 3-oxoacyl-[ACP] + holo-[ACP] + CO2. Functionally, essential protein that catalyzes the condensation reaction of fatty acid synthesis by the addition to an acyl acceptor of two carbons from malonyl-ACP. Specific for elongation from C-16 and C-16 to unsaturated C-18 fatty acids. Confers resistance to low temperatures by maintaining chloroplast membranes integrity. Involved in the regulation of fatty acids ratios during seed metabolism. Required for embryo development, especially at the transition from the globular to the heart stage. The sequence is that of 3-oxoacyl-[acyl-carrier-protein] synthase II, chloroplastic (KAS2) from Arabidopsis thaliana (Mouse-ear cress).